Consider the following 1275-residue polypeptide: Surfactin synthase subunit 3 (1275 aa).

Residues 968–1043 (GPRNEMEETI…GISAYLKNGG (76 aa)) enclose the Carrier domain. At Ser1003 the chain carries O-(pantetheine 4'-phosphoryl)serine. Positions 1059-1271 (QIIFAFPPVL…ILLEFLNTQT (213 aa)) are thioesterase. Residues Ser1120, Asp1147, and His1247 contribute to the active site.

Belongs to the ATP-dependent AMP-binding enzyme family. Pantetheine 4'-phosphate serves as cofactor.

It participates in antibiotic biosynthesis; surfactin biosynthesis. Its function is as follows. Probably activates a leucine. The sequence is that of Surfactin synthase subunit 3 (srfAC) from Bacillus subtilis (strain 168).